Here is a 354-residue protein sequence, read N- to C-terminus: NAD-dependent protein deacetylase hst2-2 (354 aa).

One can recognise a Deacetylase sirtuin-type domain in the interval 16 to 279 (QCQNQTTLDS…REVARHLGWD (264 aa)). NAD(+)-binding positions include 43–63 (GAGLSTSSGLADFRTPDTGLY) and 126–129 (QNID). Catalysis depends on His-146, which acts as the Proton acceptor. Zn(2+)-binding residues include Cys-154, Cys-157, Cys-178, and Cys-183. NAD(+) contacts are provided by residues 220–222 (GTS), 245–247 (NRE), and Cys-265.

Belongs to the sirtuin family. Class I subfamily. Zn(2+) serves as cofactor.

It localises to the nucleus. The enzyme catalyses N(6)-acetyl-L-lysyl-[protein] + NAD(+) + H2O = 2''-O-acetyl-ADP-D-ribose + nicotinamide + L-lysyl-[protein]. Functionally, NAD-dependent histone deacetylase, which could function in telomeric silencing, cell cycle progression and chromosome stability. The chain is NAD-dependent protein deacetylase hst2-2 from Emericella nidulans (strain FGSC A4 / ATCC 38163 / CBS 112.46 / NRRL 194 / M139) (Aspergillus nidulans).